The following is a 430-amino-acid chain: MTEIAAIHAREILDSRGNPTVEADVLLADGTLGRAAVPSGASTGEHEAVELRDGDKSHYLGKGVLKAVDNIESVIAPELEGMDAANQRLLDATMIALDGTPNKGRLGANAILAVSMAAARASANSLKIPLYRYLGGANASILPTPMMNILNGGAHADNNVDFQEFMVMPVGAERFSEALRWGAEIFHTLKGVLKKKGYNTAVGDEGGFAPSLSSNTEAIEVILEAIELAGYKAGEDVAIALDPAASEFYDKEKGKYIFKKSDKSEKTSEEMAQYWESWTRQYPIISIEDGFAEDDWQGWRYFTELVGSRIQLVGDDLFVTNTERLQRGIEEGIANSILIKVNQIGTVSETFEAIELGRRYGYTSIISHRSGETEDTFIADLAVATGAGQIKTGSASRTDRIAKYNQLLRIEEQLGQTGEFLGLEAVNFGE.

Glutamine 163 contributes to the (2R)-2-phosphoglycerate binding site. The active-site Proton donor is the glutamate 205. Positions 242, 288, and 315 each coordinate Mg(2+). The (2R)-2-phosphoglycerate site is built by lysine 340, arginine 369, serine 370, and lysine 391. Catalysis depends on lysine 340, which acts as the Proton acceptor.

Belongs to the enolase family. The cofactor is Mg(2+).

It localises to the cytoplasm. It is found in the secreted. The protein resides in the cell surface. The catalysed reaction is (2R)-2-phosphoglycerate = phosphoenolpyruvate + H2O. Its pathway is carbohydrate degradation; glycolysis; pyruvate from D-glyceraldehyde 3-phosphate: step 4/5. Catalyzes the reversible conversion of 2-phosphoglycerate (2-PG) into phosphoenolpyruvate (PEP). It is essential for the degradation of carbohydrates via glycolysis. The sequence is that of Enolase from Acidobacterium capsulatum (strain ATCC 51196 / DSM 11244 / BCRC 80197 / JCM 7670 / NBRC 15755 / NCIMB 13165 / 161).